Reading from the N-terminus, the 177-residue chain is Large ribosomal subunit protein uL6 (177 aa).

This sequence belongs to the universal ribosomal protein uL6 family. As to quaternary structure, part of the 50S ribosomal subunit.

This protein binds to the 23S rRNA, and is important in its secondary structure. It is located near the subunit interface in the base of the L7/L12 stalk, and near the tRNA binding site of the peptidyltransferase center. This is Large ribosomal subunit protein uL6 from Rickettsia typhi (strain ATCC VR-144 / Wilmington).